Reading from the N-terminus, the 290-residue chain is Microtubule-associated protein P320 (290 aa).

8 repeats span residues 1–38 (SEYR…PIDP), 39–76 (SEYR…PIDP), 77–114 (SEYR…PIDP), 115–152 (SEYR…PIDP), 153–190 (SEYR…PIDP), 191–228 (SEYR…PIDP), 229–266 (SEYR…PIDP), and 267–290 (SEYR…DESH). The disordered stretch occupies residues 251–290 (SHFLTTTHEAYKPIDPSEYRQKRTVGEEVTTDMRHVDESH). The span at 259–290 (EAYKPIDPSEYRQKRTVGEEVTTDMRHVDESH) shows a compositional bias: basic and acidic residues.

It localises to the cytoplasm. It is found in the cytoskeleton. The polypeptide is Microtubule-associated protein P320 (Trypanosoma brucei brucei).